We begin with the raw amino-acid sequence, 228 residues long: MENQPKLNSSKEVIAFLAERFPQCFSAEGEARPLKIGIFQDLVERVEGEMNLSKTQLRSALRLYTSSWRYLYGVKPGATRVDLDGNPCGELDEQHVEHARKQLEEAKARVQAQRAEQQAKKREAAAAAGEKEDAPRRERKPRPAPRRKETTPRTPRAEKPAAKAPRAPREEQHTPVSDISALTVGQSLKVKAGNNAMDATVLEVTKDGVRVQLNSGMSLIVRAEHLVF.

The interval 105 to 178 is disordered; sequence EAKARVQAQR…REEQHTPVSD (74 aa). Composition is skewed to basic and acidic residues over residues 117-136 and 146-173; these read QQAKKREAAAAAGEKEDAPR and RRKETTPRTPRAEKPAAKAPRAPREEQH.

It belongs to the ProQ family.

It localises to the cytoplasm. In terms of biological role, RNA chaperone with significant RNA binding, RNA strand exchange and RNA duplexing activities. May regulate ProP activity through an RNA-based, post-transcriptional mechanism. The chain is RNA chaperone ProQ from Citrobacter koseri (strain ATCC BAA-895 / CDC 4225-83 / SGSC4696).